The following is a 132-amino-acid chain: Ribosome-binding factor A (132 aa).

It belongs to the RbfA family. Monomer. Binds 30S ribosomal subunits, but not 50S ribosomal subunits or 70S ribosomes.

Its subcellular location is the cytoplasm. One of several proteins that assist in the late maturation steps of the functional core of the 30S ribosomal subunit. Associates with free 30S ribosomal subunits (but not with 30S subunits that are part of 70S ribosomes or polysomes). Required for efficient processing of 16S rRNA. May interact with the 5'-terminal helix region of 16S rRNA. The protein is Ribosome-binding factor A of Rhizorhabdus wittichii (strain DSM 6014 / CCUG 31198 / JCM 15750 / NBRC 105917 / EY 4224 / RW1) (Sphingomonas wittichii).